Here is a 477-residue protein sequence, read N- to C-terminus: Myc-associated zinc finger protein (477 aa).

2 disordered regions span residues 59–78 and 121–146; these read AQSPFQAAPAPPPTPQAPAA and TVDTAALKQPPAPPPPPPPVSAPAAE. The segment covering 130-141 has biased composition (pro residues); it reads PPAPPPPPPPVS. C2H2-type zinc fingers lie at residues 190-212, 279-301, 307-329, and 337-360; these read YICALCAKEFKNGYNLRRHEAIH, HACEMCGKAFRDVYHLNRHKLSH, YQCPVCQQRFKRKDRMSYHVRSH, and YNCSHCGKSFSRPDHLNSHVRQVH. At serine 361 the chain carries Phosphoserine. Residues 366 to 388 form a C2H2-type 5 zinc finger; that stretch reads FKCEKCEAAFATKDRLRAHTVRH. The segment at 392 to 413 adopts a C2H2-type 6; atypical zinc-finger fold; the sequence is VPCHVCGKMLSSAYISDHMKVH.

In terms of assembly, interacts with BPTF. As to quaternary structure, forms a heterodimer with MAZ isoform 2; the interaction inhibits MAZ isoform 1-mediated transcription activation. Forms a heterodimer with MAZ isoform 1; the interaction inhibits MAZ isoform 1-mediated transcription activation. Present in kidney, liver and brain. In the brain, highest levels are found in motor cortex and midfrontal cortex (at protein level). As to expression, expressed in the heart, brain, placenta, lung, liver, skeletal muscle and weakly expressed in the kidney. Expressed in the joint synovium.

It is found in the nucleus. Functionally, transcriptional regulator, potentially with dual roles in transcription initiation and termination. Its function is as follows. Binds DNA and functions as a transcriptional activator. Binds to two G/A-rich sites, ME1a1 and ME1a2, within the MYC promoter having greater affinity for the former. Also binds to multiple G/C-rich sites within the promoter of the Sp1 family of transcription factors. Binds DNA and functions as a transcriptional activator. Inhibits MAZ isoform 1-mediated transcription. In terms of biological role, binds DNA and functions as a transcriptional activator. In Homo sapiens (Human), this protein is Myc-associated zinc finger protein (MAZ).